A 354-amino-acid polypeptide reads, in one-letter code: tRNA N6-adenosine threonylcarbamoyltransferase (354 aa).

Residues His-111 and His-115 each contribute to the Fe cation site. Substrate is bound by residues 134–138 (LVSGG), Asp-167, Gly-180, and Asn-279. Residue Asp-319 coordinates Fe cation.

It belongs to the KAE1 / TsaD family. The cofactor is Fe(2+).

The protein resides in the cytoplasm. It catalyses the reaction L-threonylcarbamoyladenylate + adenosine(37) in tRNA = N(6)-L-threonylcarbamoyladenosine(37) in tRNA + AMP + H(+). Functionally, required for the formation of a threonylcarbamoyl group on adenosine at position 37 (t(6)A37) in tRNAs that read codons beginning with adenine. Is involved in the transfer of the threonylcarbamoyl moiety of threonylcarbamoyl-AMP (TC-AMP) to the N6 group of A37, together with TsaE and TsaB. TsaD likely plays a direct catalytic role in this reaction. In Neisseria gonorrhoeae (strain ATCC 700825 / FA 1090), this protein is tRNA N6-adenosine threonylcarbamoyltransferase.